The following is a 1145-amino-acid chain: Protein sumv-2 (1145 aa).

Residues 1–13 (MKPGRKSLPKKNR) are compositionally biased toward basic residues. 5 disordered regions span residues 1–310 (MKPG…APPA), 429–464 (QSRT…QKAR), 999–1025 (HSAS…AGSE), 1040–1059 (QIAA…PRTE), and 1073–1145 (ITTG…ISLI). Over residues 14–34 (ASNITEKMPTTSTEAQSSSSK) the composition is skewed to polar residues. Basic and acidic residues-rich tracts occupy residues 73–104 (KTTE…EPRK) and 216–225 (VPEKKPKIED). Low complexity predominate over residues 226 to 248 (APTTSSPKKSTPTSAPPTRASAR). Residues 455-464 (GDEKRQQKAR) are compositionally biased toward basic and acidic residues. Over residues 999–1013 (HSASSSAAPSPVGAS) the composition is skewed to low complexity. The segment covering 1091-1102 (VIERGDFRDHRP) has biased composition (basic and acidic residues). The span at 1121 to 1136 (QQPPLPSPAPPPPRGP) shows a compositional bias: pro residues.

Influences the activity of genes involved in vulval development. The chain is Protein sumv-2 from Caenorhabditis elegans.